Consider the following 315-residue polypeptide: Porphobilinogen deaminase (315 aa).

At C241 the chain carries S-(dipyrrolylmethanemethyl)cysteine.

It belongs to the HMBS family. In terms of assembly, monomer. Requires dipyrromethane as cofactor.

The enzyme catalyses 4 porphobilinogen + H2O = hydroxymethylbilane + 4 NH4(+). Its pathway is porphyrin-containing compound metabolism; protoporphyrin-IX biosynthesis; coproporphyrinogen-III from 5-aminolevulinate: step 2/4. In terms of biological role, tetrapolymerization of the monopyrrole PBG into the hydroxymethylbilane pre-uroporphyrinogen in several discrete steps. This chain is Porphobilinogen deaminase, found in Nitratidesulfovibrio vulgaris (strain ATCC 29579 / DSM 644 / CCUG 34227 / NCIMB 8303 / VKM B-1760 / Hildenborough) (Desulfovibrio vulgaris).